We begin with the raw amino-acid sequence, 81 residues long: Protein L83L (81 aa).

Residues 1-28 are disordered; sequence MDTSLKNNDGALEADNKNYQDYKDEPDK. The span at 14–28 shows a compositional bias: basic and acidic residues; that stretch reads ADNKNYQDYKDEPDK.

This sequence belongs to the asfivirus L83L family. Interacts with host IL1B.

Its subcellular location is the host cytoplasm. May subvert the host innate immune response by interacting with host IL1B and interfering with its function. The sequence is that of Protein L83L from Ornithodoros (relapsing fever ticks).